A 411-amino-acid chain; its full sequence is Lissencephaly-1 homolog (411 aa).

One can recognise a LisH domain in the interval 9-41 (QREELNQAIADYLGSNGYADSLEAFRKEADLST). Residues 56-83 (TSVIRLQKKVMELEAKLTEAEKEVIEGA) are a coiled coil. WD repeat units follow at residues 106–147 (GHRA…RSLK), 148–187 (GHTD…ECVK), 191–230 (GHDH…CVKT), 233–272 (GHRE…CKVE), 275–334 (DHEH…CLFT), 337–376 (GHDN…CMKT), and 379–411 (AHQH…WECR).

It belongs to the WD repeat LIS1/nudF family.

It is found in the cytoplasm. Its subcellular location is the cytoskeleton. The protein resides in the microtubule organizing center. The protein localises to the centrosome. Functionally, positively regulates the activity of the minus-end directed microtubule motor protein dynein. May enhance dynein-mediated microtubule sliding by targeting dynein to the microtubule plus end. Required for several dynein- and microtubule-dependent processes. This Drosophila ananassae (Fruit fly) protein is Lissencephaly-1 homolog.